We begin with the raw amino-acid sequence, 163 residues long: Crossover junction endodeoxyribonuclease RuvC (163 aa).

Catalysis depends on residues aspartate 7, glutamate 68, and histidine 142. Mg(2+)-binding residues include aspartate 7, glutamate 68, and histidine 142.

It belongs to the RuvC family. As to quaternary structure, homodimer which binds Holliday junction (HJ) DNA. The HJ becomes 2-fold symmetrical on binding to RuvC with unstacked arms; it has a different conformation from HJ DNA in complex with RuvA. In the full resolvosome a probable DNA-RuvA(4)-RuvB(12)-RuvC(2) complex forms which resolves the HJ. Mg(2+) is required as a cofactor.

It is found in the cytoplasm. It carries out the reaction Endonucleolytic cleavage at a junction such as a reciprocal single-stranded crossover between two homologous DNA duplexes (Holliday junction).. Functionally, the RuvA-RuvB-RuvC complex processes Holliday junction (HJ) DNA during genetic recombination and DNA repair. Endonuclease that resolves HJ intermediates. Cleaves cruciform DNA by making single-stranded nicks across the HJ at symmetrical positions within the homologous arms, yielding a 5'-phosphate and a 3'-hydroxyl group; requires a central core of homology in the junction. The consensus cleavage sequence is 5'-(A/T)TT(C/G)-3'. Cleavage occurs on the 3'-side of the TT dinucleotide at the point of strand exchange. HJ branch migration catalyzed by RuvA-RuvB allows RuvC to scan DNA until it finds its consensus sequence, where it cleaves and resolves the cruciform DNA. This is Crossover junction endodeoxyribonuclease RuvC from Anaplasma phagocytophilum (strain HZ).